A 429-amino-acid chain; its full sequence is Polypyrimidine tract-binding protein homolog 2 (429 aa).

Ser2 is modified (N-acetylserine). RRM domains follow at residues 18 to 96, 110 to 197, and 243 to 323; these read KVLH…YSNR, GNVL…YSAH, and SNVL…YSRH. The tract at residues 331 to 429 is disordered; the sequence is NNDRSRDYTM…QHYGGPGPMH (99 aa). Residues 367–381 are compositionally biased toward low complexity; it reads GGSHHQQQQQPQGGW. Positions 382-397 are enriched in gly residues; it reads VQPGGQGSMGMGGGGH.

It is found in the nucleus. Its function is as follows. Plays a role in pre-mRNA splicing. Binds to the polypyrimidine tract of introns. May promote the binding of U2 snRNP to pre-mRNA. The sequence is that of Polypyrimidine tract-binding protein homolog 2 from Arabidopsis thaliana (Mouse-ear cress).